The primary structure comprises 402 residues: Ketol-acid reductoisomerase, mitochondrial (402 aa).

The N-terminal 26 residues, 1 to 26 (MAARNCTKALRPLARQLATPAVQRRT), are a transit peptide targeting the mitochondrion. Positions 63–252 (KEEVHERADW…AVGSGYLYET (190 aa)) constitute a KARI N-terminal Rossmann domain. Residues 90-99 (GYGSQGHGQG), 114-119 (RKNGKS), and 152-156 (SDAAQ) each bind NADP(+). His177 is a catalytic residue. The 148-residue stretch at 253 to 400 (TFEKEVYSDL…KAVRSLRPEN (148 aa)) folds into the KARI C-terminal knotted domain. Mg(2+) contacts are provided by Asp261, Glu265, Glu297, and Glu301. Ser323 contacts substrate.

Belongs to the ketol-acid reductoisomerase family. Mg(2+) serves as cofactor.

The protein resides in the mitochondrion. It catalyses the reaction (2R)-2,3-dihydroxy-3-methylbutanoate + NADP(+) = (2S)-2-acetolactate + NADPH + H(+). The enzyme catalyses (2R,3R)-2,3-dihydroxy-3-methylpentanoate + NADP(+) = (S)-2-ethyl-2-hydroxy-3-oxobutanoate + NADPH + H(+). It participates in amino-acid biosynthesis; L-isoleucine biosynthesis; L-isoleucine from 2-oxobutanoate: step 2/4. Its pathway is amino-acid biosynthesis; L-valine biosynthesis; L-valine from pyruvate: step 2/4. In Neurospora crassa (strain ATCC 24698 / 74-OR23-1A / CBS 708.71 / DSM 1257 / FGSC 987), this protein is Ketol-acid reductoisomerase, mitochondrial (ilv-2).